A 1381-amino-acid chain; its full sequence is EH domain-containing and endocytosis protein 1 (1381 aa).

EH domains follow at residues 14-113 (EQAF…NPAP) and 135-227 (DIAK…IRLE). EF-hand domains lie at 47–82 (LPGQLLSQVWATVDIDNKGFLNLNEFSAALRMIAQL) and 167–202 (LPNQTLGEIWALCDRDASGVLDKSEFIMAMYLIQLC). Ca(2+)-binding residues include aspartate 180, aspartate 182, serine 184, and glutamate 191. At threonine 238 the chain carries Phosphothreonine. A phosphoserine mark is found at serine 241 and serine 244. At threonine 245 the chain carries Phosphothreonine. Serine 248 and serine 249 each carry phosphoserine. Threonine 251 bears the Phosphothreonine mark. A Phosphoserine modification is found at serine 265. An EF-hand 3 domain is found at 276–311 (EKKQQFDAIFDSLDKQHAGSLSSAVLVPFFLSSRLN). The 90-residue stretch at 277–366 (KKQQFDAIFD…NELLQSPALG (90 aa)) folds into the EH 3 domain. The interval 389-535 (SKPSLQDMPH…SSPVKRTAST (147 aa)) is disordered. 2 stretches are compositionally biased toward polar residues: residues 404–424 (AVNTQPTVPQVLPQNSNNGSL) and 432–447 (PSFSSPSPTKAQTVVQ). At serine 419 the chain carries Phosphoserine. A compositionally biased stretch (low complexity) spans 448–470 (NNTNNSFSYDNNNGQATLQQQQP). Phosphothreonine occurs at positions 450, 477, and 487. Residues 477 to 494 (THSSSGLKKFTPTSNFGQ) show a composition bias toward polar residues. Phosphoserine is present on serine 495. A coiled-coil region spans residues 593-882 (GEASAQLSNA…RELSERQMNL (290 aa)). A Glycyl lysine isopeptide (Lys-Gly) (interchain with G-Cter in ubiquitin) cross-link involves residue lysine 674. Position 848 is a phosphoserine (serine 848). The interval 898–919 (SASNTDTTTKEATSRGNVHEDT) is disordered. Positions 905–919 (TTKEATSRGNVHEDT) are enriched in basic and acidic residues. A phosphoserine mark is found at serine 931, serine 950, serine 964, serine 1008, serine 1012, and serine 1020. 3 disordered regions span residues 933-1202 (LNVN…KDEF), 1214-1285 (VEED…QVSN), and 1298-1322 (SKAEPTKVATPSIPQQPIPLKNDPI). The span at 937–957 (RVKDDEEKTERTESDVFDRDV) shows a compositional bias: basic and acidic residues. 2 stretches are compositionally biased toward polar residues: residues 960-989 (LGSQSDSENANTNNGTQSGNETANPNLTET) and 1005-1019 (RSQSLTSSVANNAPQ). The segment covering 1021–1036 (VRDDVELPETLEERDT) has biased composition (basic and acidic residues). Composition is skewed to polar residues over residues 1037–1049 (INNTANRDNTGNL) and 1061–1073 (ATASTDVLSNETT). Position 1046 is a phosphothreonine (threonine 1046). Serine 1069, serine 1087, serine 1093, serine 1095, serine 1096, and serine 1100 each carry phosphoserine. Polar residues predominate over residues 1093–1103 (SVSSIQESPKI). Threonine 1111 carries the post-translational modification Phosphothreonine. The span at 1127-1139 (SDSSSSDDDEFED) shows a compositional bias: acidic residues. Composition is skewed to polar residues over residues 1147–1164 (TVKTLQTPYNAQPTSSLE) and 1178–1195 (TSPSHNEGNSKKASTNSI). Residues serine 1181 and serine 1187 each carry the phosphoserine modification. A compositionally biased stretch (acidic residues) spans 1214-1226 (VEEDNGADSESEF). The tract at residues 1217 to 1381 (DNGADSESEF…AATNFLLDSA (165 aa)) is able to bind biological membranes. Over residues 1253–1285 (NAFTGTLTSSSNPTIPKPQVQQQSTSDPAQVSN) the composition is skewed to polar residues. Threonine 1307 carries the post-translational modification Phosphothreonine. Lysine 1329 participates in a covalent cross-link: Glycyl lysine isopeptide (Lys-Gly) (interchain with G-Cter in ubiquitin). In terms of domain architecture, UBA spans 1338 to 1380 (ATTPKSLAVEELSGMGFTEEEAHNALEKCNWDLEAATNFLLDS). Position 1343 is a phosphoserine (serine 1343).

This sequence belongs to the VDP/USO1/EDE1 family. In terms of assembly, interacts (via UBA domain) with monoubiquitin and ENT1 (via asparagine-proline-phenylalanine tripeptide motif called NPF). Interacts with PAL1 and SYP1.

The protein localises to the cytoplasm. In terms of biological role, functions at the internalization step of the clathrin-mediated endocytosis (CME) as an early-acting scaffold protein. Requires clathrin adapter proteins, ENT1/2 and YAP1801/2, for normal spatiotemporal dynamics and viability. Binds to biological membranes in a ubiquitin-dependent manner. In Saccharomyces cerevisiae (strain ATCC 204508 / S288c) (Baker's yeast), this protein is EH domain-containing and endocytosis protein 1 (EDE1).